A 263-amino-acid polypeptide reads, in one-letter code: Receptor-transporting protein 1 (263 aa).

Residues 1–238 (MRIFRPWRLR…ETGSGWNFCS (238 aa)) lie on the Cytoplasmic side of the membrane. The 3CxxC-type zinc finger occupies 88 to 197 (ASGRFHCSWC…GEFCEACQEG (110 aa)). A helical transmembrane segment spans residues 239–259 (IPWCLFWATVLLLIIYLQLSF). Residues 260-263 (RSSV) lie on the Extracellular side of the membrane.

The protein belongs to the TMEM7 family. In terms of assembly, interacts with olfactory receptors.

Its subcellular location is the cell membrane. Its function is as follows. Specifically promotes functional cell surface expression of olfactory receptors, but not of other GPCRs. The polypeptide is Receptor-transporting protein 1 (RTP1) (Macaca fascicularis (Crab-eating macaque)).